A 107-amino-acid chain; its full sequence is Glutaredoxin-1 (107 aa).

Residue Ala-2 is modified to N-acetylalanine. Residues 3–106 enclose the Glutaredoxin domain; it reads QEFVNCKIQS…TRLKQIGALQ (104 aa). Lys-9 is modified (N6-succinyllysine). 2 cysteine pairs are disulfide-bonded: Cys-23–Cys-26 and Cys-79–Cys-83.

It belongs to the glutaredoxin family.

It localises to the cytoplasm. Functionally, has a glutathione-disulfide oxidoreductase activity in the presence of NADPH and glutathione reductase. Reduces low molecular weight disulfides and proteins. The polypeptide is Glutaredoxin-1 (Glrx) (Mus musculus (Mouse)).